The sequence spans 799 residues: Protein phosphatase 1 regulatory subunit 3F (799 aa).

The tract at residues 1–30 (MARTAPVEPPLRHPAPPSPAAGEPRASAEA) is disordered. The Cytoplasmic portion of the chain corresponds to 1-772 (MARTAPVEPP…LTQTLGVLAG (772 aa)). A compositionally biased stretch (pro residues) spans 7–19 (VEPPLRHPAPPSP). At Ser18 the chain carries Phosphoserine. The segment covering 20 to 30 (AAGEPRASAEA) has biased composition (low complexity). Positions 36–39 (RVLF) match the PP1-binding motif motif. 4 disordered regions span residues 53–108 (RYRP…PVPA), 201–235 (SPPG…SPDD), 332–353 (RRRP…LAEH), and 417–439 (ATCG…DRAA). Over residues 78–97 (ADEEDDGEDGDEGEEEEEAF) the composition is skewed to acidic residues. The 157-residue stretch at 127-283 (LERLGRVMVE…NNHGRNYTVL (157 aa)) folds into the CBM21 domain. The segment covering 334–353 (RPFEEEPRMRSADDNTLAEH) has biased composition (basic and acidic residues). A Phosphoserine modification is found at Ser545. 3 disordered regions span residues 566–600 (KDTE…PPEI), 663–688 (SKSP…SWVP), and 722–743 (PHVN…KRSP). Positions 569-579 (EDPDDEGEGED) are enriched in acidic residues. Residues 585-594 (PSSPEGGSPK) are compositionally biased toward low complexity. Phosphoserine occurs at positions 587 and 592. Basic and acidic residues predominate over residues 679–688 (PTERESSWVP). A helical transmembrane segment spans residues 773 to 793 (LVMVPVALNSGVSLLVLVLCL). At 794–799 (SLAWFS) the chain is on the extracellular side.

In terms of tissue distribution, highly expressed in brain (at protein level).

The protein localises to the membrane. Its function is as follows. Glycogen-targeting subunit for protein phosphatase 1 (PP1). The protein is Protein phosphatase 1 regulatory subunit 3F (Ppp1r3f) of Mus musculus (Mouse).